The primary structure comprises 743 residues: Phosphoribosylformylglycinamidine synthase subunit PurL (743 aa).

Histidine 50 is an active-site residue. Residues tyrosine 53 and lysine 92 each coordinate ATP. Mg(2+) is bound at residue glutamate 94. Substrate is bound by residues serine 95 to histidine 98 and arginine 117. Histidine 96 acts as the Proton acceptor in catalysis. Residue aspartate 118 participates in Mg(2+) binding. Glutamine 241 contacts substrate. Aspartate 269 contacts Mg(2+). Glutamate 313–glutamine 315 serves as a coordination point for substrate. The ATP site is built by aspartate 495 and glycine 532. Asparagine 533 is a Mg(2+) binding site. Serine 535 is a binding site for substrate.

Belongs to the FGAMS family. In terms of assembly, monomer. Part of the FGAM synthase complex composed of 1 PurL, 1 PurQ and 2 PurS subunits.

It is found in the cytoplasm. The catalysed reaction is N(2)-formyl-N(1)-(5-phospho-beta-D-ribosyl)glycinamide + L-glutamine + ATP + H2O = 2-formamido-N(1)-(5-O-phospho-beta-D-ribosyl)acetamidine + L-glutamate + ADP + phosphate + H(+). It participates in purine metabolism; IMP biosynthesis via de novo pathway; 5-amino-1-(5-phospho-D-ribosyl)imidazole from N(2)-formyl-N(1)-(5-phospho-D-ribosyl)glycinamide: step 1/2. Its function is as follows. Part of the phosphoribosylformylglycinamidine synthase complex involved in the purines biosynthetic pathway. Catalyzes the ATP-dependent conversion of formylglycinamide ribonucleotide (FGAR) and glutamine to yield formylglycinamidine ribonucleotide (FGAM) and glutamate. The FGAM synthase complex is composed of three subunits. PurQ produces an ammonia molecule by converting glutamine to glutamate. PurL transfers the ammonia molecule to FGAR to form FGAM in an ATP-dependent manner. PurS interacts with PurQ and PurL and is thought to assist in the transfer of the ammonia molecule from PurQ to PurL. In Rhizobium etli (strain CIAT 652), this protein is Phosphoribosylformylglycinamidine synthase subunit PurL.